The following is an 874-amino-acid chain: Alanine--tRNA ligase (874 aa).

Zn(2+) contacts are provided by histidine 563, histidine 567, cysteine 665, and histidine 669.

The protein belongs to the class-II aminoacyl-tRNA synthetase family. The cofactor is Zn(2+).

The protein resides in the cytoplasm. It carries out the reaction tRNA(Ala) + L-alanine + ATP = L-alanyl-tRNA(Ala) + AMP + diphosphate. Functionally, catalyzes the attachment of alanine to tRNA(Ala) in a two-step reaction: alanine is first activated by ATP to form Ala-AMP and then transferred to the acceptor end of tRNA(Ala). Also edits incorrectly charged Ser-tRNA(Ala) and Gly-tRNA(Ala) via its editing domain. The protein is Alanine--tRNA ligase of Haemophilus ducreyi (strain 35000HP / ATCC 700724).